A 992-amino-acid chain; its full sequence is MGMRPPAGLPSLSKRSRVLLVLALVVAALLLVGPRLISTYTDWLWFGEVGFRGVFTTVLITRLLLFLVVGVVVGGIVWLALLLAYRSRPVFVPVSGPNDPVARYRTTVMTRLRLFGLAIPIAVGLLAGLIAQSSWVTVQLFVNGGAFGVADPEFGLDVGFYTFDLPFYRFVLNWLFVAVLLAFFASLVTHYIFGGLKLAGRGGALTNAARVQLAVLAGTFILLKAVAYWFDRYSLLSSSRKEPTFTGGSYTDMNAVLQAKLILLAIAVICAGAFFAAIFLRDLRIPAMATALLVLSSILVGAVWPLVVEQFSVRPNAADKESAYIERNIAATRQAYGITDDKVEYQDYQGYGTKPPRDVPADVMTIENTRLLDPNILSRTFTQQQQLKNFYGFPPTLDIDRYDIDGQLRDYIVAARELSSKSLTGNQTDWINKHTVYTHGNGLVAAPANRVNAAAGESAEEAANSNSGYPVYMVSDIASQEAGNQVIPVQQPRIYYGEVIADTDADYAIVGGSGGSDPREYDTDTSRYTYTGSGGVPIGNWFNRLAFAAKYTERNILFSGAIGSDSKIIYNRDPRDRVTHVAPWLTADGDSYPAVVDGKVVWIVDAYTTLQDYPYAQRSSLDGLVEDSIDQNTGRLLPRKEVSYIRNSVKATVDAYDGTVKLYQVDQNDPVLDAWMGVFPDAVQPADSIPDELRAHFRYPEDLFKVQREMLAKYHVDDPKEFFTNNAFWSVPSDPTIDTSANQPPYYVLVGDPETGKPSFNLTSAMVGYSREFLSAYLSVKSDPENYGKFTVLQLPTDTQTQGPQQTQNSMISDPRVASERTLLERSNKIQYGNLLTLPIADGGILYVEPMYTERSSTGPNTSTFPQLSRVLVSYREPPPSNSVRVGYAPTLAQALDQVFGAGTGSVATAPSAEEGTPPETGTTPPVDQGAAPAPTAPATPPSGTDVSAAVAELDASLDALTSAQRSGDFAAYGAALARVQKAVAAYEAIPK.

A run of 7 helical transmembrane segments spans residues 18–38 (VLLV…RLIS), 63–83 (LLLF…ALLL), 114–134 (LFGL…AQSS), 174–194 (WLFV…YIFG), 211–231 (VQLA…YWFD), 260–280 (KLIL…AIFL), and 288–308 (MATA…PLVV). The tract at residues 904-948 (TGSVATAPSAEEGTPPETGTTPPVDQGAAPAPTAPATPPSGTDVS) is disordered. The segment covering 908 to 934 (ATAPSAEEGTPPETGTTPPVDQGAAPA) has biased composition (low complexity).

It belongs to the UPF0182 family.

Its subcellular location is the cell membrane. This Rhodococcus jostii (strain RHA1) protein is UPF0182 protein RHA1_ro06389.